We begin with the raw amino-acid sequence, 90 residues long: Acylphosphatase (90 aa).

The Acylphosphatase-like domain occupies 3 to 90 (RYSAIVQGRV…DGEKKFSIKY (88 aa)). Catalysis depends on residues Arg-18 and Asn-36.

The protein belongs to the acylphosphatase family.

It catalyses the reaction an acyl phosphate + H2O = a carboxylate + phosphate + H(+). This chain is Acylphosphatase (acyP), found in Clostridium beijerinckii (strain ATCC 51743 / NCIMB 8052) (Clostridium acetobutylicum).